The chain runs to 329 residues: Ribosomal RNA small subunit methyltransferase H (329 aa).

S-adenosyl-L-methionine is bound by residues 44–46 (GGY), Asp62, Asp110, and Gln117. A disordered region spans residues 297 to 329 (APAELAANPRARSARLRSAERTSAPARRLGDAA).

This sequence belongs to the methyltransferase superfamily. RsmH family.

Its subcellular location is the cytoplasm. It carries out the reaction cytidine(1402) in 16S rRNA + S-adenosyl-L-methionine = N(4)-methylcytidine(1402) in 16S rRNA + S-adenosyl-L-homocysteine + H(+). Functionally, specifically methylates the N4 position of cytidine in position 1402 (C1402) of 16S rRNA. The protein is Ribosomal RNA small subunit methyltransferase H of Rhodospirillum centenum (strain ATCC 51521 / SW).